Consider the following 201-residue polypeptide: Recombination protein RecR (201 aa).

The segment at 60 to 75 (CSRCGNVDTVDPCIVC) adopts a C4-type zinc-finger fold. Positions 83-178 (SVIIVVEDVS…KITRLAHGVP (96 aa)) constitute a Toprim domain.

This sequence belongs to the RecR family.

May play a role in DNA repair. It seems to be involved in an RecBC-independent recombinational process of DNA repair. It may act with RecF and RecO. The chain is Recombination protein RecR from Rhizobium johnstonii (strain DSM 114642 / LMG 32736 / 3841) (Rhizobium leguminosarum bv. viciae).